The primary structure comprises 691 residues: CREB-regulated transcription coactivator 2 (691 aa).

Polar residues predominate over residues 1–20 (MATSGANGPGSATASASNPR). The interval 1 to 30 (MATSGANGPGSATASASNPRKFSEKIALQK) is disordered. Ala2 carries the N-acetylalanine modification. Arg51 bears the Asymmetric dimethylarginine; by PRMT6 mark. Phosphoserine is present on residues Ser70, Ser86, and Ser90. 3 positions are modified to asymmetric dimethylarginine; by PRMT6: Arg99, Arg120, and Arg123. The residue at position 136 (Ser136) is a Phosphoserine. Residues Arg161 and Arg168 each carry the asymmetric dimethylarginine; by PRMT6 modification. The residue at position 169 (Thr169) is a Phosphothreonine. Ser171 carries the phosphoserine; by AMPK, MARK2, SIK1 and SIK2 modification. The span at 174–186 (ALHTSVMNPNPQD) shows a compositional bias: polar residues. Residues 174–195 (ALHTSVMNPNPQDTYPGPTPPS) are disordered. Phosphothreonine is present on Thr192. Lys234 participates in a covalent cross-link: Glycyl lysine isopeptide (Lys-Gly) (interchain with G-Cter in SUMO2). The Nuclear export signal motif lies at 271-287 (TGGSLPDLTNLHFPPPL). Ser274 is modified (phosphoserine; by MARK2). Disordered regions lie at residues 280–306 (NLHF…GGNS) and 335–491 (HSPL…YSPP). Ser306, Ser368, Ser393, Ser433, and Ser456 each carry phosphoserine. Composition is skewed to low complexity over residues 335–383 (HSPL…HALP) and 390–411 (PSLS…SPVL). Polar residues predominate over residues 447–468 (SQQQLPKQFSPTMSPTLSSITQ). A Phosphotyrosine modification is found at Tyr488. 2 positions are modified to phosphoserine: Ser489 and Ser492. Thr501 carries the post-translational modification Phosphothreonine. Positions 513 to 543 (CLVQPSGGQPPGRQPHYGTLYPPGSSGHGQQ) are disordered. A phosphoserine mark is found at Ser611, Ser621, and Ser622.

It belongs to the TORC family. Binds, as a tetramer, through its N-terminal region, with the bZIP domain of CREB1. 'Arg-314' in the bZIP domain of CREB1 is essential for this interaction. Interaction, via its C-terminal, with TAF4, enhances recruitment of TAF4 to CREB1. Interacts with SIK2. Interacts with 14-3-3 proteins, YWHAB and YWHAG. Interacts (probably when phosphorylated at Ser-171) with YWHAE. Interacts with calmodulin-dependent catalytic subunit PPP3CA/calcineurin A. Interaction with COP1 mediates nuclear export and degradation of CRTC2. Post-translationally, phosphorylation/dephosphorylation states of Ser-171 are required for regulating transduction of CREB activity. CRTCs/TORCs are inactive when phosphorylated, and active when dephosphorylated at this site. This primary site of phosphorylation, is regulated by cAMP and calcium levels and is dependent on the phosphorylation of SIKs (SIK1 and SIK2) by LKB1. Following adenylyl cyclase activation, dephosphorylated at Ser-171 by PPP3CA/calcineurin A resulting in CRTC2 dissociation from 14-3-3 proteins and PPP3CA. Both insulin and AMPK increase this phosphorylation of CRTC2 while glucagon suppresses it. Phosphorylation at Ser-274 by MARK2 is induced under low glucose conditions and dephosphorylated in response to glucose influx. Phosphorylation at Ser-274 promotes interaction with 14-3-3 proteins and translocation to the cytoplasm. In terms of processing, asymmetric dimethylation of arginine resisues by PRMT6 enhances the association of CRTC2 with CREB on the promoters of gluconeogenic genes.

The protein localises to the cytoplasm. The protein resides in the nucleus. In terms of biological role, transcriptional coactivator for CREB1 which activates transcription through both consensus and variant cAMP response element (CRE) sites. Acts as a coactivator, in the SIK/TORC signaling pathway, being active when dephosphorylated and acts independently of CREB1 'Ser-133' phosphorylation. Enhances the interaction of CREB1 with TAF4. Regulates gluconeogenesis as a component of the LKB1/AMPK/TORC2 signaling pathway. Regulates the expression of specific genes such as the steroidogenic gene, StAR. Potent coactivator of PPARGC1A and inducer of mitochondrial biogenesis in muscle cells. The chain is CREB-regulated transcription coactivator 2 (Crtc2) from Rattus norvegicus (Rat).